The sequence spans 122 residues: Large ribosomal subunit protein uL18 (122 aa).

It belongs to the universal ribosomal protein uL18 family. As to quaternary structure, part of the 50S ribosomal subunit; part of the 5S rRNA/L5/L18/L25 subcomplex. Contacts the 5S and 23S rRNAs.

Its function is as follows. This is one of the proteins that bind and probably mediate the attachment of the 5S RNA into the large ribosomal subunit, where it forms part of the central protuberance. The chain is Large ribosomal subunit protein uL18 from Thermosipho africanus (strain TCF52B).